Reading from the N-terminus, the 642-residue chain is Chaperone protein DnaK (642 aa).

Threonine 200 is modified (phosphothreonine; by autocatalysis). Residues 600–616 (EAAQQSAGAAGPMPGAP) show a composition bias toward low complexity. A disordered region spans residues 600-642 (EAAQQSAGAAGPMPGAPAEEEPSDGPRKAKGRVVDAEIVDDDK). Residues 623–634 (DGPRKAKGRVVD) are compositionally biased toward basic and acidic residues.

Belongs to the heat shock protein 70 family.

In terms of biological role, acts as a chaperone. This is Chaperone protein DnaK from Akkermansia muciniphila (strain ATCC BAA-835 / DSM 22959 / JCM 33894 / BCRC 81048 / CCUG 64013 / CIP 107961 / Muc).